Here is a 329-residue protein sequence, read N- to C-terminus: Helicase VP6-A (329 aa).

2 disordered regions span residues isoleucine 27 to glycine 130 and aspartate 189 to proline 232. Composition is skewed to basic and acidic residues over residues glutamate 36 to glutamate 58, glycine 65 to isoleucine 83, and serine 96 to glycine 109. Lysine 110 contributes to the ATP binding site. Residues lysine 110–glycine 129 are compositionally biased toward gly residues. Composition is skewed to basic and acidic residues over residues aspartate 189–glycine 207 and histidine 215–proline 232.

The protein belongs to the reoviruses VP6 family. In terms of assembly, homohexamer.

It is found in the virion. It carries out the reaction ATP + H2O = ADP + phosphate + H(+). Functionally, ATP dependent RNA helicase essential for RNA packaging and viral transcription. Possesses ss- and dsRNA-binding capacity. The protein is Helicase VP6-A (Segment-9) of Antilocapra americana (Pronghorn).